An 830-amino-acid polypeptide reads, in one-letter code: Probable mixed-linked glucan synthase 7 (830 aa).

The next 2 helical transmembrane spans lie at 61-81 (LTIFVRIAIFVLFFKWRITYA) and 98-118 (AATFWTASIAGELWFAFMWVL). D186 is a catalytic residue. The stretch at 251–279 (ELVRDRRRVRREYEEMRLRIDALQAADAR) forms a coiled coil. D367 and D369 together coordinate substrate. D529 is an active-site residue. A run of 6 helical transmembrane segments spans residues 613–633 (LFLMAYCLFPAIPLIAGGGGW), 638–658 (TPTYVAFLAALMVTLAAVAVL), 676–696 (FWMVSATSAYLAAVAQVALKV), 735–755 (ALMAPTAAALAVNVASMAAAG), 776–796 (LPVAFNVWVVVHLYPFALGLM), and 805–825 (PILFLFAVVAYLAVRFLCLLL).

This sequence belongs to the glycosyltransferase 2 family. Plant cellulose synthase-like F subfamily. In terms of tissue distribution, expressed in mature pollen.

It localises to the golgi apparatus membrane. In terms of biological role, may catalyze both beta-1,3 and beta-1,4 glycosidic linkage on beta-D-glucan. Essential for (1,3;1,4)-beta-D-glucans synthesis in grasses and cereals (Poaceae). The mixed-linked glucans (which are not present in walls of dicotyledons or most other monocotyledonous plants) are particularly important constituents of the walls of the starchy endosperm and aleurone cells of cereal grains such as oats, wheat, rice and barley. They can account for up to 70% by weight of the wall. This chain is Probable mixed-linked glucan synthase 7 (CSLF7), found in Oryza sativa subsp. japonica (Rice).